Consider the following 67-residue polypeptide: Protein C' (67 aa).

The protein belongs to the rhabdoviruses C protein family.

Seems to stimulates transcription by the viral polymerase. May play a role in viral pathogenesis or transmission by insects vectors. In Vesicular stomatitis Indiana virus (strain 98COE North America) (VSIV), this protein is Protein C' (P).